Consider the following 104-residue polypeptide: MQKIRRDDEIIVIAGKDKGKRGKVLKVLADNRLVVGGLNLVKRHTKPNPMSGVQGGIVEKEAPLHASNVAIFNGETNKADRVGFKVEDGKKIRVFKSTQKAVDA.

Belongs to the universal ribosomal protein uL24 family. Part of the 50S ribosomal subunit.

One of two assembly initiator proteins, it binds directly to the 5'-end of the 23S rRNA, where it nucleates assembly of the 50S subunit. In terms of biological role, one of the proteins that surrounds the polypeptide exit tunnel on the outside of the subunit. The polypeptide is Large ribosomal subunit protein uL24 (Pseudomonas fluorescens (strain Pf0-1)).